The chain runs to 93 residues: Small ribosomal subunit protein uS19 (93 aa).

The protein belongs to the universal ribosomal protein uS19 family.

Functionally, protein S19 forms a complex with S13 that binds strongly to the 16S ribosomal RNA. The sequence is that of Small ribosomal subunit protein uS19 from Desulfitobacterium hafniense (strain Y51).